A 29-amino-acid polypeptide reads, in one-letter code: Potassium channel toxin alpha-KTx 3.15 (29 aa).

The cysteines at positions 8 and 27 are disulfide-linked.

This sequence belongs to the short scorpion toxin superfamily. Potassium channel inhibitor family. Alpha-KTx 03 subfamily. In terms of tissue distribution, expressed by the venom gland.

It is found in the secreted. May play a role in blocking voltage-gated potassium channels Kv1.1/KCNA1, Kv1.3/KCNA3 and Kv1.6/KCNA6. The sequence is that of Potassium channel toxin alpha-KTx 3.15 from Mesobuthus gibbosus (Mediterranean checkered scorpion).